Consider the following 205-residue polypeptide: Pyridoxine/pyridoxamine 5'-phosphate oxidase (205 aa).

FMN-binding positions include 53–58, 68–69, K75, and Q97; these read RMVLLK and YT. K58 provides a ligand contact to substrate. Substrate-binding residues include Y115, R119, and S123. Residues 132–133 and W177 each bind FMN; that span reads QS. Residue 183 to 185 participates in substrate binding; that stretch reads RLH. R187 is a binding site for FMN.

Belongs to the pyridoxamine 5'-phosphate oxidase family. As to quaternary structure, homodimer. FMN serves as cofactor.

It carries out the reaction pyridoxamine 5'-phosphate + O2 + H2O = pyridoxal 5'-phosphate + H2O2 + NH4(+). The catalysed reaction is pyridoxine 5'-phosphate + O2 = pyridoxal 5'-phosphate + H2O2. The protein operates within cofactor metabolism; pyridoxal 5'-phosphate salvage; pyridoxal 5'-phosphate from pyridoxamine 5'-phosphate: step 1/1. It participates in cofactor metabolism; pyridoxal 5'-phosphate salvage; pyridoxal 5'-phosphate from pyridoxine 5'-phosphate: step 1/1. Its function is as follows. Catalyzes the oxidation of either pyridoxine 5'-phosphate (PNP) or pyridoxamine 5'-phosphate (PMP) into pyridoxal 5'-phosphate (PLP). This chain is Pyridoxine/pyridoxamine 5'-phosphate oxidase, found in Mesorhizobium japonicum (strain LMG 29417 / CECT 9101 / MAFF 303099) (Mesorhizobium loti (strain MAFF 303099)).